Here is a 315-residue protein sequence, read N- to C-terminus: Ribose-phosphate pyrophosphokinase (315 aa).

ATP is bound by residues 37–39 (DGE) and 96–97 (RQ). Mg(2+) contacts are provided by H131 and D170. K194 is a catalytic residue. Residues R196, D220, and 224-228 (DTGGT) contribute to the D-ribose 5-phosphate site.

Belongs to the ribose-phosphate pyrophosphokinase family. Class I subfamily. In terms of assembly, homohexamer. Mg(2+) serves as cofactor.

It is found in the cytoplasm. It catalyses the reaction D-ribose 5-phosphate + ATP = 5-phospho-alpha-D-ribose 1-diphosphate + AMP + H(+). It functions in the pathway metabolic intermediate biosynthesis; 5-phospho-alpha-D-ribose 1-diphosphate biosynthesis; 5-phospho-alpha-D-ribose 1-diphosphate from D-ribose 5-phosphate (route I): step 1/1. Involved in the biosynthesis of the central metabolite phospho-alpha-D-ribosyl-1-pyrophosphate (PRPP) via the transfer of pyrophosphoryl group from ATP to 1-hydroxyl of ribose-5-phosphate (Rib-5-P). The sequence is that of Ribose-phosphate pyrophosphokinase from Yersinia pestis.